The sequence spans 135 residues: Ribonuclease VapC5 (135 aa).

The PINc domain maps to 9 to 130 (VLDTSVFIAT…FAALDGAASV (122 aa)). Residues aspartate 11 and aspartate 100 each contribute to the Mg(2+) site.

It belongs to the PINc/VapC protein family. In terms of assembly, forms a complex with VapB5. The cofactor is Mg(2+).

Its subcellular location is the secreted. Probable toxic component of a type II toxin-antitoxin (TA) system. The cognate antitoxin is VapB5. Has limited RNase activity on substrates; activity is seen with a VapC5-VapB5 complex. This chain is Ribonuclease VapC5, found in Mycobacterium tuberculosis (strain ATCC 25618 / H37Rv).